The following is a 979-amino-acid chain: Protein SMAX1-LIKE 6 (979 aa).

The Clp R domain maps to 8–190; sequence ARECLTEEAA…PVTQLSSRFS (183 aa). Repeat regions lie at residues 12 to 86 and 100 to 190; these read LTEE…LDRL and VSNS…SRFS. The EAR signature appears at 833–837; it reads LDLNL.

This sequence belongs to the ClpA/ClpB family. Interacts with TPL/TPR in an EAR-motif dependent manner. Interacts with TPR3. Interacts with MAX2 and TPR2. Interacts with D14. The interaction with D14 occurs in the presence of (2'R) stereoisomers of strigolactones, but not (2'S) stereoisomers. In terms of processing, ubiquitinated upon strigolactone treatment. Probable proteolytic target of SCF(MAX2)-mediated stigolactone signaling. As to expression, detected in roots, seedlings and axillary branches. Expressed in the primary rosette buds and expanding leaves of adult rosettes, the vasculature of the hypocotyls, cotyledons, and mature roots, and in the midvein and petioles of young leaves.

The protein localises to the nucleus. Functionally, probable component of a transcriptional corepressor complex involved in branching control. Regulates cotyledon expansion and lateral root growth, but not germination or hypocotyl elongation. Promotes auxin transport and PIN1 accumulation in the stem and represses BRC1/TCP18 expression in axillary buds. This is Protein SMAX1-LIKE 6 from Arabidopsis thaliana (Mouse-ear cress).